Consider the following 317-residue polypeptide: Zinc metalloproteinase/disintegrin (317 aa).

Residues 1–26 constitute a propeptide that is removed on maturation; the sequence is EAPKMCGVTQNWESYEPIKKASQSNL. The region spanning 32 to 228 is the Peptidase M12B domain; that stretch reads RYIELVIVAD…QKPQCILNKP (197 aa). Ca(2+) is bound by residues E35 and D119. 3 cysteine pairs are disulfide-bonded: C143/C223, C183/C207, and C185/C190. H168 lines the Zn(2+) pocket. E169 is a catalytic residue. Zn(2+) contacts are provided by H172 and H178. C223 and N226 together coordinate Ca(2+). The propeptide occupies 229 to 244; sequence LRTDTVSTPVSGNELL. The Disintegrin domain occupies 236–317; it reads TPVSGNELLE…AGCPRNPFHA (82 aa). 6 disulfides stabilise this stretch: C250–C259, C252–C260, C265–C279, C273–C303, C278–C282, and C291–C310. The Cell attachment site signature appears at 295-297; the sequence is RGD.

It belongs to the venom metalloproteinase (M12B) family. P-II subfamily. P-IIa sub-subfamily. In terms of assembly, monomer. Zn(2+) serves as cofactor. Expressed by the venom gland.

The protein localises to the secreted. In terms of biological role, metalloproteinase that impairs hemostasis in the envenomed animal. Its function is as follows. Inhibits GPIIb/GPIIIa (ITGA2B/ITGB3) binding to immobilized fibrinogen with an IC(50) of 2.2 nM and ADP-induced platelet aggregation with an IC(50) of 131 nM, respectively. Inhibits angiogenesis. By binding to vitronectin receptor (alpha-V/beta-3 (ITGAV/ITGB3)), also induces apoptosis of endothelial cells by blocking their attachment to extracellular matrix proteins. Inhibits platelet aggregation induced by ADP (IC(50) is 30 nM), collagen (IC(50) is 500 nM), thrombin and epinephrin (IC(50) is 160 nM). This Gloydius brevicauda (Korean slamosa snake) protein is Zinc metalloproteinase/disintegrin.